The primary structure comprises 3411 residues: Genome polyprotein (3411 aa).

Residues 1–104 (MSGRKAQGKT…LSSRKRRSHD (104 aa)) are Cytoplasmic-facing. A hydrophobic; homodimerization of capsid protein C region spans residues 38 to 72 (PGPSRGVQGFIFFFLFNILTGKKITAHLKRLWKML). Positions 102-121 (SHDVLTVQFLILGMLLMTGG) are cleaved as a propeptide — ER anchor for the capsid protein C, removed in mature form by serine protease NS3. Residues 105–125 (VLTVQFLILGMLLMTGGVTLV) traverse the membrane as a helical segment. Topologically, residues 126 to 244 (RKNRWLLLNV…GERQLQKIER (119 aa)) are extracellular. N134 and N150 each carry an N-linked (GlcNAc...) asparagine; by host glycan. A helical transmembrane segment spans residues 245 to 265 (WFVRNPFFAVTALTIAYLVGS). At 266 to 270 (NMTQR) the chain is on the cytoplasmic side. Residues 271 to 285 (VVIALLVLAVGPAYS) form a helical membrane-spanning segment. Residues 286–730 (AHCIGITDRD…TVFGSAFQGL (445 aa)) are Extracellular-facing. 8 cysteine pairs are disulfide-bonded: C288/C315, C345/C401, C345/C406, C359/C390, C377/C401, C377/C406, C467/C568, and C585/C615. The fusion peptide stretch occupies residues 383–396 (DRGWGNGCGLFGKG). Residues 731–751 (FGGLNWITKVIIGAVLIWVGI) form a helical membrane-spanning segment. Residues 752–757 (NTRNMT) are Extracellular-facing. Residues 758–778 (MSMSMILVGVIMMFLSLGVGA) form a helical membrane-spanning segment. Residues 779–1132 (DQGCAINFAK…LVRSWVTAGE (354 aa)) are Extracellular-facing. Intrachain disulfides connect C782-C793, C833-C921, C957-C1002, C1058-C1107, C1069-C1091, and C1090-C1094. Residues N908 and N986 are each glycosylated (N-linked (GlcNAc...) asparagine; by host). A helical membrane pass occupies residues 1133–1153 (IHAVPFGLVSMMIALEVVLRK). Residues 1154 to 1201 (RQGPKQMLVGGVVLLGAMLVGQVTLLDLLKLTVAVGLHFHEMNNGGDA) are Cytoplasmic-facing. Residues 1202 to 1222 (MYMALIAAFSVRPGLLIGFGL) form a helical membrane-spanning segment. The Lumenal segment spans residues 1223-1287 (RTLWSPRERL…ILPLMALLTP (65 aa)). A helical transmembrane segment spans residues 1288 to 1308 (VTMAEVRLATMLFCTVVIIGV). Residues 1309 to 1355 (LYQNSKDTSMQKTIPLVALTLTSYLGLTQPFLGLCAFLATRIFGRRS) lie on the Cytoplasmic side of the membrane. Residues 1356-1376 (IPVNEALAAAGLVGVLAGLAF) traverse the membrane as a helical segment. Residues 1377–1378 (QE) are Lumenal-facing. A helical membrane pass occupies residues 1379-1399 (MENFLGPIAVGGILMMLVSVA). Topologically, residues 1400–1456 (GRVDGLELKKLGEVAWEEEAEISGSSARYDVALSEQGEFKLLSEEKVPWDQVVMTSL) are cytoplasmic. The interval 1407–1446 (LKKLGEVAWEEEAEISGSSARYDVALSEQGEFKLLSEEKV) is interacts with and activates NS3 protease. The helical intramembrane region spans 1457–1477 (ALVGAAIHPFALLLVLAGWLF). The Cytoplasmic segment spans residues 1478–2157 (HVRGARRSGD…RNALSMMPEA (680 aa)). Residues 1485-1665 (SGDVLWDIPT…EVKEEGKEEL (181 aa)) form the Peptidase S7 domain. Residues H1537, D1561, and S1622 each act as charge relay system; for serine protease NS3 activity in the active site. Positions 1669–1825 (PTMLKKGKTT…HSNGEIEDVQ (157 aa)) constitute a Helicase ATP-binding domain. The interval 1673-1676 (KKGK) is important for RNA-binding. 1682 to 1689 (FHPGAGKT) serves as a coordination point for ATP. The short motif at 1773-1776 (DEAH) is the DEAH box element. The Helicase C-terminal domain maps to 1820-1997 (EIEDVQTDIP…VRGGMVAPLY (178 aa)). K1877 is subject to N6-acetyllysine; by host. A disordered region spans residues 1942–1961 (AAQRRGRIGRNPNRDGDSYY). Residues 2158–2178 (MTIVMLFILAGLLTSGMVIFF) form a helical membrane-spanning segment. At 2179-2186 (MSPKGISR) the chain is on the lumenal side. Residues 2187–2207 (MSMAMGTMAGCGYLMFLGGVK) constitute an intramembrane region (helical). Residues 2208 to 2209 (PT) lie on the Lumenal side of the membrane. The helical transmembrane segment at 2210–2230 (HISYIMLIFFVLMVVVIPEPG) threads the bilayer. Over 2231 to 2241 (QQRSIQDNQVA) the chain is Cytoplasmic. The helical transmembrane segment at 2242–2262 (FLIIGILTLVSVVAANELGML) threads the bilayer. Residues 2263 to 2293 (EKTKEDLFGKKNSIPSSASPWSWPDLDLKPG) lie on the Lumenal side of the membrane. The helical intramembrane region spans 2294-2314 (AAWTVYVGIVTMLSPMLHHWI). Topologically, residues 2315–2360 (KVEYGNLSLSGIAQSASVLSFMDKGIPFMKMNISVIMLLISGWNSI) are lumenal. Residues 2361 to 2380 (TVMPLLCGIGCAMLHWSLIL) traverse the membrane as a helical segment. At 2381 to 2421 (PGIKAQQSKLAQRRVFHGVAKNPVVDGNPTVDIEEAPEMPV) the chain is on the cytoplasmic side. Residues 2422 to 2442 (LYEKKLALYLLLALSLASVAM) form a helical membrane-spanning segment. Residues 2443 to 2445 (CRT) lie on the Lumenal side of the membrane. The helical transmembrane segment at 2446 to 2466 (PFSLAEGIVLASAALGPLIEG) threads the bilayer. The Cytoplasmic portion of the chain corresponds to 2467-3411 (NTSLLWNGPM…DADLQPGELI (945 aa)). One can recognise an mRNA cap 0-1 NS5-type MT domain in the interval 2507 to 2771 (GTANGKTLGE…DVTLPIGTRS (265 aa)). S2562 contributes to the S-adenosyl-L-methionine binding site. The residue at position 2562 (S2562) is a Phosphoserine. K2567 functions as the For 2'-O-MTase activity in the catalytic mechanism. The S-adenosyl-L-methionine site is built by G2592, W2593, T2610, L2611, D2637, and I2638. Residue D2652 is the For 2'-O-MTase activity of the active site. Residue I2653 coordinates S-adenosyl-L-methionine. Catalysis depends on for 2'-O-MTase activity residues K2688 and E2724. Residue Y2726 coordinates S-adenosyl-L-methionine. Residues 2878-2911 (RKIMKVVNRWLFRHLAREKNPRLCTKEEFIAKVR) carry the Nuclear localization signal motif. E2945, H2949, C2954, and C2957 together coordinate Zn(2+). A RdRp catalytic domain is found at 3035–3187 (GGFYADDTAG…RPIDDRFGLA (153 aa)). 3 residues coordinate Zn(2+): H3222, C3238, and C3357.

It in the N-terminal section; belongs to the class I-like SAM-binding methyltransferase superfamily. mRNA cap 0-1 NS5-type methyltransferase family. In terms of assembly, homodimer. Interacts (via N-terminus) with host EXOC1 (via C-terminus); this interaction results in EXOC1 degradation through the proteasome degradation pathway. Forms heterodimers with envelope protein E in the endoplasmic reticulum and Golgi. As to quaternary structure, homodimer; in the endoplasmic reticulum and Golgi. Interacts with protein prM. Interacts with non-structural protein 1. In terms of assembly, homodimer; Homohexamer when secreted. Interacts with envelope protein E. Interacts (via N-terminus) with serine protease NS3. As to quaternary structure, forms a heterodimer with serine protease NS3. May form homooligomers. In terms of assembly, forms a heterodimer with NS2B. Interacts with non-structural protein 2A (via N-terminus). Interacts with NS4B. Interacts with unphosphorylated RNA-directed RNA polymerase NS5; this interaction stimulates RNA-directed RNA polymerase NS5 guanylyltransferase activity. NS3 interacts with host PDCD6IP; this interaction contributes to virion release. Interacts with serine protease NS3. As to quaternary structure, homodimer. Interacts with host STAT2; this interaction prevents the establishment of cellular antiviral state. Interacts with serine protease NS3. Interacts with host TRIM23; this interaction leads to NS5 ubiquitination. In terms of processing, specific enzymatic cleavages in vivo yield mature proteins. The nascent capsid protein C contains a C-terminal hydrophobic domain that act as a signal sequence for translocation of prM into the lumen of the ER. Mature capsid protein C is cleaved at a site upstream of this hydrophobic domain by NS3. prM is cleaved in post-Golgi vesicles by a host furin, releasing the mature small envelope protein M, and peptide pr. Non-structural protein 2A-alpha, a C-terminally truncated form of non-structural protein 2A, results from partial cleavage by NS3. Specific enzymatic cleavages in vivo yield mature proteins peptide 2K acts as a signal sequence and is removed from the N-terminus of NS4B by the host signal peptidase in the ER lumen. Signal cleavage at the 2K-4B site requires a prior NS3 protease-mediated cleavage at the 4A-2K site. Post-translationally, cleaved in post-Golgi vesicles by a host furin, releasing the mature small envelope protein M, and peptide pr. This cleavage is incomplete as up to 30% of viral particles still carry uncleaved prM. N-glycosylated. In terms of processing, N-glycosylated. The excreted form is glycosylated and this is required for efficient secretion of the protein from infected cells. Post-translationally, polyubiquitinated; ubiquitination is probably mediated by host TRIM23 and is prerequisite for NS5-STAT2 interaction. NS5 is not ISGylated or sumoylated. Phosphorylated on serines residues. This phosphorylation may trigger NS5 nuclear localization. In terms of processing, acetylated by host KAT5. Acetylation modulates NS3 RNA-binding and -unwinding activities and plays an important role for viral replication.

Its subcellular location is the virion. It localises to the host nucleus. It is found in the host cytoplasm. The protein resides in the host perinuclear region. The protein localises to the secreted. Its subcellular location is the virion membrane. It localises to the host endoplasmic reticulum membrane. The enzyme catalyses Selective hydrolysis of -Xaa-Xaa-|-Yaa- bonds in which each of the Xaa can be either Arg or Lys and Yaa can be either Ser or Ala.. The catalysed reaction is RNA(n) + a ribonucleoside 5'-triphosphate = RNA(n+1) + diphosphate. It catalyses the reaction a ribonucleoside 5'-triphosphate + H2O = a ribonucleoside 5'-diphosphate + phosphate + H(+). It carries out the reaction ATP + H2O = ADP + phosphate + H(+). The enzyme catalyses a 5'-end (5'-triphosphoguanosine)-ribonucleoside in mRNA + S-adenosyl-L-methionine = a 5'-end (N(7)-methyl 5'-triphosphoguanosine)-ribonucleoside in mRNA + S-adenosyl-L-homocysteine. The catalysed reaction is a 5'-end (N(7)-methyl 5'-triphosphoguanosine)-ribonucleoside in mRNA + S-adenosyl-L-methionine = a 5'-end (N(7)-methyl 5'-triphosphoguanosine)-(2'-O-methyl-ribonucleoside) in mRNA + S-adenosyl-L-homocysteine + H(+). Its function is as follows. Plays a role in virus budding by binding to the cell membrane and gathering the viral RNA into a nucleocapsid that forms the core of a mature virus particle. During virus entry, may induce genome penetration into the host cytoplasm after hemifusion induced by the surface proteins. Can migrate to the cell nucleus where it modulates host functions. Inhibits RNA silencing by interfering with host Dicer. Functionally, prevents premature fusion activity of envelope proteins in trans-Golgi by binding to envelope protein E at pH6.0. After virion release in extracellular space, gets dissociated from E dimers. In terms of biological role, acts as a chaperone for envelope protein E during intracellular virion assembly by masking and inactivating envelope protein E fusion peptide. prM is the only viral peptide matured by host furin in the trans-Golgi network probably to avoid catastrophic activation of the viral fusion activity in acidic Golgi compartment prior to virion release. prM-E cleavage is inefficient, and many virions are only partially matured. These uncleaved prM would play a role in immune evasion. Its function is as follows. May play a role in virus budding. Exerts cytotoxic effects by activating a mitochondrial apoptotic pathway through M ectodomain. May display a viroporin activity. Binds to host cell surface receptor and mediates fusion between viral and cellular membranes. Envelope protein is synthesized in the endoplasmic reticulum in the form of heterodimer with protein prM. They play a role in virion budding in the ER, and the newly formed immature particle is covered with 60 spikes composed of heterodimer between precursor prM and envelope protein E. The virion is transported to the Golgi apparatus where the low pH causes dissociation of PrM-E heterodimers and formation of E homodimers. prM-E cleavage is inefficient, and many virions are only partially matured. These uncleaved prM would play a role in immune evasion. Functionally, involved in immune evasion, pathogenesis and viral replication. Once cleaved off the polyprotein, is targeted to three destinations: the viral replication cycle, the plasma membrane and the extracellular compartment. Essential for viral replication. Required for formation of the replication complex and recruitment of other non-structural proteins to the ER-derived membrane structures. Excreted as a hexameric lipoparticle that plays a role against host immune response. Antagonizing the complement function. Binds to the host macrophages and dendritic cells. Inhibits signal transduction originating from Toll-like receptor 3 (TLR3). In terms of biological role, component of the viral RNA replication complex that functions in virion assembly and antagonizes the host immune response. Its function is as follows. Required cofactor for the serine protease function of NS3. May have membrane-destabilizing activity and form viroporins. Displays three enzymatic activities: serine protease, NTPase and RNA helicase. NS3 serine protease, in association with NS2B, performs its autocleavage and cleaves the polyprotein at dibasic sites in the cytoplasm: C-prM, NS2A-NS2B, NS2B-NS3, NS3-NS4A, NS4A-2K and NS4B-NS5. NS3 RNA helicase binds RNA and unwinds dsRNA in the 3' to 5' direction. Also plays a role in virus assembly. Functionally, regulates the ATPase activity of the NS3 helicase activity. NS4A allows NS3 helicase to conserve energy during unwinding. In terms of biological role, functions as a signal peptide for NS4B and is required for the interferon antagonism activity of the latter. Its function is as follows. Induces the formation of ER-derived membrane vesicles where the viral replication takes place. Inhibits interferon (IFN)-induced host STAT1 phosphorylation and nuclear translocation, thereby preventing the establishment of cellular antiviral state by blocking the IFN-alpha/beta pathway. Replicates the viral (+) and (-) RNA genome, and performs the capping of genomes in the cytoplasm. NS5 methylates viral RNA cap at guanine N-7 and ribose 2'-O positions. Besides its role in RNA genome replication, also prevents the establishment of cellular antiviral state by blocking the interferon-alpha/beta (IFN-alpha/beta) signaling pathway. IFN-I induces binding of NS5 to host IFN-activated transcription factor STAT2, preventing its transcriptional activity. Host TRIM23 is the E3 ligase that interacts with and polyubiquitinates NS5 to promote its binding to STAT2 and trigger IFN-I signaling inhibition. This is Genome polyprotein from Yellow fever virus (strain French neurotropic vaccine FNV) (YFV).